A 365-amino-acid chain; its full sequence is UBX domain-containing protein 2B (365 aa).

Residues M1–F97 are disordered. 2 stretches are compositionally biased toward basic and acidic residues: residues D50–T63 and L73–Q95. Residues D175–V240 form the SEP domain. Residues D286–Q363 form the UBX domain.

The protein belongs to the NSFL1C family.

It localises to the nucleus. It is found in the cytoplasm. Its subcellular location is the cytosol. The protein resides in the endoplasmic reticulum. The protein localises to the golgi apparatus. It localises to the cytoskeleton. It is found in the microtubule organizing center. Its subcellular location is the centrosome. Adapter protein required for Golgi and endoplasmic reticulum biogenesis. Involved in Golgi and endoplasmic reticulum maintenance during interphase and in their reassembly at the end of mitosis. Regulates the centrosomal levels of kinase AURKA/Aurora A during mitotic progression by promoting AURKA removal from centrosomes in prophase. Also, regulates spindle orientation during mitosis. In Gallus gallus (Chicken), this protein is UBX domain-containing protein 2B (UBXN2B).